Consider the following 1035-residue polypeptide: Teashirt homolog 2 (1035 aa).

Positions 1–92 (MPRRKQQAPK…ESLLSDASDQ (92 aa)) are disordered. Positions 13–42 (AGYAQEEQLKEEEEIKEEEEEEEDSGSVAQ) form a coiled coil. A compositionally biased stretch (acidic residues) spans 21-37 (LKEEEEIKEEEEEEEDS). Composition is skewed to polar residues over residues 39 to 49 (SVAQLQGSNDP) and 66 to 92 (SYQNSPGSHLSNQDAENESLLSDASDQ). Lys-189 is covalently cross-linked (Glycyl lysine isopeptide (Lys-Gly) (interchain with G-Cter in SUMO2)). 2 C2H2-type zinc fingers span residues 216-240 (FRCRQCSAAYDTLVELTVHMNETGH) and 276-300 (LKCMFCGDSFDSLQDLSVHMIKTKH). A disordered region spans residues 240–266 (HYQDDNRKKDKLRPTSYSKPRKRAFQD). Residues Lys-307 and Lys-316 each participate in a glycyl lysine isopeptide (Lys-Gly) (interchain with G-Cter in SUMO2) cross-link. A C2H2-type 3; atypical zinc finger spans residues 381 to 405 (LKCMECGSSHDTLQQLTTHMMVTGH). Lys-418 is covalently cross-linked (Glycyl lysine isopeptide (Lys-Gly) (interchain with G-Cter in SUMO2)). A compositionally biased stretch (low complexity) spans 432 to 450 (SLSDAPSSDSLAPKPSSNS). The tract at residues 432–496 (SLSDAPSSDS…DPLQKPLDPA (65 aa)) is disordered. A compositionally biased stretch (basic and acidic residues) spans 460 to 483 (ELKRESKKEKPEELRTDEKVLKSE). Residues Lys-462, Lys-481, Lys-498, and Lys-602 each participate in a glycyl lysine isopeptide (Lys-Gly) (interchain with G-Cter in SUMO2) cross-link. Disordered regions lie at residues 600–674 (QVKK…VEPV) and 764–791 (QPIDLTKSKSKKAESSQAQSCTSPPQKH). Positions 601–669 (VKKEPEDKEE…KDGGEKEKAQ (69 aa)) are enriched in basic and acidic residues. Glycyl lysine isopeptide (Lys-Gly) (interchain with G-Cter in SUMO2) cross-links involve residues Lys-801 and Lys-821. Positions 842 to 912 (RKGRQSNWNP…NVKYQLRKTG (71 aa)) form a DNA-binding region, homeobox. The segment at 927–949 (FYCSDCASQFRTPSTYISHLESH) adopts a C2H2-type 4 zinc-finger fold. Residues 968-977 (VEQEISRVSS) are compositionally biased toward low complexity. Disordered regions lie at residues 968-987 (VEQEISRVSSAQRSPETIAG) and 1015-1035 (SKTHSKSPEHHAQFVTDVDEE). Ser-981 bears the Phosphoserine mark. A C2H2-type 5 zinc finger spans residues 995-1018 (FKCKLCCRTFVSKHAVKLHLSKTH).

It belongs to the teashirt C2H2-type zinc-finger protein family. As to quaternary structure, interacts (via homeobox domain) with APBB1 (via PID domain 1). Sumoylated.

The protein localises to the nucleus. Its function is as follows. Probable transcriptional regulator involved in developmental processes. May act as a transcriptional repressor (Potential). This is Teashirt homolog 2 (TSHZ2) from Sus scrofa (Pig).